A 252-amino-acid polypeptide reads, in one-letter code: Phosphoglycolate phosphatase (252 aa).

Asp13 serves as the catalytic Nucleophile. Positions 13, 15, and 192 each coordinate Mg(2+).

This sequence belongs to the HAD-like hydrolase superfamily. CbbY/CbbZ/Gph/YieH family. As to quaternary structure, monomer. It depends on Mg(2+) as a cofactor. Chloride is required as a cofactor.

The enzyme catalyses 2-phosphoglycolate + H2O = glycolate + phosphate. It functions in the pathway organic acid metabolism; glycolate biosynthesis; glycolate from 2-phosphoglycolate: step 1/1. Specifically catalyzes the dephosphorylation of 2-phosphoglycolate. Is involved in the dissimilation of the intracellular 2-phosphoglycolate formed during the DNA repair of 3'-phosphoglycolate ends, a major class of DNA lesions induced by oxidative stress. The sequence is that of Phosphoglycolate phosphatase from Salmonella paratyphi A (strain ATCC 9150 / SARB42).